The chain runs to 589 residues: V-type ATP synthase alpha chain 1 (589 aa).

239–246 provides a ligand contact to ATP; sequence GPFGAGKT.

The protein belongs to the ATPase alpha/beta chains family.

It catalyses the reaction ATP + H2O + 4 H(+)(in) = ADP + phosphate + 5 H(+)(out). In terms of biological role, produces ATP from ADP in the presence of a proton gradient across the membrane. The V-type alpha chain is a catalytic subunit. The chain is V-type ATP synthase alpha chain 1 (atpA1) from Treponema pallidum (strain Nichols).